Consider the following 371-residue polypeptide: 3-methyl-D-ornithine--L-lysine ligase (371 aa).

Residue lysine 18 coordinates ATP. Residue leucine 19–glutamine 20 participates in L-lysine binding. Residues aspartate 39, asparagine 57–isoleucine 58, and glutamate 80–asparagine 81 each bind ATP. L-lysine is bound at residue glutamate 80. Residues glutamate 93–asparagine 277 enclose the ATP-grasp domain. Residues lysine 112, lysine 139, serine 146, and glutamate 168 to valine 171 contribute to the ADP site. Residues serine 177–glutamate 179 and aspartate 233 each bind D-ornithine. Positions 235, 247, and 249 each coordinate Mg(2+). Glutamate 247 lines the ADP pocket. D-ornithine contacts are provided by residues arginine 251–threonine 256 and glutamate 310. The L-lysine site is built by serine 254 and glutamate 310.

The protein belongs to the PylC family. Requires Mg(2+) as cofactor.

The enzyme catalyses (3R)-3-methyl-D-ornithine + L-lysine + ATP = (3R)-3-methyl-D-ornithyl-N(6)-L-lysine + ADP + phosphate + H(+). Its pathway is amino-acid biosynthesis; L-pyrrolysine biosynthesis. Its function is as follows. Is required for the biosynthesis of pyrrolysine. Catalyzes the ATP-dependent ligation between (3R)-3-methyl-D-ornithine and L-lysine, leading to (3R)-3-methyl-D-ornithyl-N6-L-lysine. Is also involved in the synthesis of pyrroline-carboxy-lysine (Pcl), a demethylated form of pyrrolysine that is generated by the pyrrolysine biosynthetic enzymes when the growth media is supplemented with D-ornithine. This chain is 3-methyl-D-ornithine--L-lysine ligase, found in Methanosarcina mazei (strain ATCC BAA-159 / DSM 3647 / Goe1 / Go1 / JCM 11833 / OCM 88) (Methanosarcina frisia).